A 547-amino-acid chain; its full sequence is Dihydroxy-acid dehydratase (547 aa).

Asp78 provides a ligand contact to Mg(2+). Residue Cys119 coordinates [2Fe-2S] cluster. The Mg(2+) site is built by Asp120 and Lys121. An N6-carboxylysine modification is found at Lys121. Position 191 (Cys191) interacts with [2Fe-2S] cluster. Mg(2+) is bound at residue Glu439. Ser464 (proton acceptor) is an active-site residue.

It belongs to the IlvD/Edd family. In terms of assembly, homodimer. The cofactor is [2Fe-2S] cluster. It depends on Mg(2+) as a cofactor.

The enzyme catalyses (2R)-2,3-dihydroxy-3-methylbutanoate = 3-methyl-2-oxobutanoate + H2O. It catalyses the reaction (2R,3R)-2,3-dihydroxy-3-methylpentanoate = (S)-3-methyl-2-oxopentanoate + H2O. The protein operates within amino-acid biosynthesis; L-isoleucine biosynthesis; L-isoleucine from 2-oxobutanoate: step 3/4. It functions in the pathway amino-acid biosynthesis; L-valine biosynthesis; L-valine from pyruvate: step 3/4. Functionally, functions in the biosynthesis of branched-chain amino acids. Catalyzes the dehydration of (2R,3R)-2,3-dihydroxy-3-methylpentanoate (2,3-dihydroxy-3-methylvalerate) into 2-oxo-3-methylpentanoate (2-oxo-3-methylvalerate) and of (2R)-2,3-dihydroxy-3-methylbutanoate (2,3-dihydroxyisovalerate) into 2-oxo-3-methylbutanoate (2-oxoisovalerate), the penultimate precursor to L-isoleucine and L-valine, respectively. This is Dihydroxy-acid dehydratase from Archaeoglobus fulgidus (strain ATCC 49558 / DSM 4304 / JCM 9628 / NBRC 100126 / VC-16).